Reading from the N-terminus, the 130-residue chain is MSMQDPIADMLTRIRNAQMVGKTSVTMPSSKLKKSVANVLTEEGYVAGFNATDGVKAELTIDLKYFEGKPVIAELDRISRPGLRAYAGKDELPTVRGGLGIAIVSTSKGVMTDRAARAAGVGGEIICTVF.

The protein belongs to the universal ribosomal protein uS8 family. As to quaternary structure, part of the 30S ribosomal subunit. Contacts proteins S5 and S12.

Its function is as follows. One of the primary rRNA binding proteins, it binds directly to 16S rRNA central domain where it helps coordinate assembly of the platform of the 30S subunit. The sequence is that of Small ribosomal subunit protein uS8 from Teredinibacter turnerae (strain ATCC 39867 / T7901).